A 438-amino-acid chain; its full sequence is Trigger factor (438 aa).

The 86-residue stretch at 163 to 248 (GDKLNIDFEG…VKRIETTEAR (86 aa)) folds into the PPIase FKBP-type domain.

The protein belongs to the FKBP-type PPIase family. Tig subfamily.

It localises to the cytoplasm. It carries out the reaction [protein]-peptidylproline (omega=180) = [protein]-peptidylproline (omega=0). In terms of biological role, involved in protein export. Acts as a chaperone by maintaining the newly synthesized protein in an open conformation. Functions as a peptidyl-prolyl cis-trans isomerase. The sequence is that of Trigger factor from Syntrophomonas wolfei subsp. wolfei (strain DSM 2245B / Goettingen).